Consider the following 868-residue polypeptide: Probable mixed-linked glucan synthase 3 (868 aa).

Positions 36 to 68 are disordered; it reads ERKAAGGGGGGAKGKHWAAADKGERRAAKECGG. Basic and acidic residues predominate over residues 53–68; the sequence is AAADKGERRAAKECGG. 2 helical membrane-spanning segments follow: residues 86 to 106 and 116 to 136; these read LLHP…LFFG and IMWF…SWLL. D211 is a catalytic residue. 2 residues coordinate substrate: D412 and D414. The active site involves D573. Transmembrane regions (helical) follow at residues 649–669, 686–706, 717–737, 771–791, 810–830, and 838–858; these read IYPV…MWLI, LLVI…WAGI, FFMI…VVNL, MLIP…VAIG, MGLL…LAIM, and IILV…YVAT.

The protein belongs to the glycosyltransferase 2 family. Plant cellulose synthase-like F subfamily.

The protein resides in the golgi apparatus membrane. May catalyze both beta-1,3 and beta-1,4 glycosidic linkage on beta-D-glucan. Essential for (1,3;1,4)-beta-D-glucans synthesis in grasses and cereals (Poaceae). The mixed-linked glucans (which are not present in walls of dicotyledons or most other monocotyledonous plants) are particularly important constituents of the walls of the starchy endosperm and aleurone cells of cereal grains such as oats, wheat, rice and barley. They can account for up to 70% by weight of the wall. This chain is Probable mixed-linked glucan synthase 3 (CSLF3), found in Oryza sativa subsp. japonica (Rice).